The chain runs to 201 residues: Large ribosomal subunit protein uL4 (201 aa).

Residues 45 to 71 form a disordered region; the sequence is AQKTRAEVTGSGKKPWRQKGTGRARAG.

This sequence belongs to the universal ribosomal protein uL4 family. As to quaternary structure, part of the 50S ribosomal subunit.

One of the primary rRNA binding proteins, this protein initially binds near the 5'-end of the 23S rRNA. It is important during the early stages of 50S assembly. It makes multiple contacts with different domains of the 23S rRNA in the assembled 50S subunit and ribosome. Functionally, forms part of the polypeptide exit tunnel. In Shewanella oneidensis (strain ATCC 700550 / JCM 31522 / CIP 106686 / LMG 19005 / NCIMB 14063 / MR-1), this protein is Large ribosomal subunit protein uL4.